An 806-amino-acid chain; its full sequence is Transitional endoplasmic reticulum ATPase (806 aa).

At Ser3 the chain carries Phosphoserine. ATP contacts are provided by residues 247-253 (PGTGKTL), Asn348, His384, and 521-526 (GCGKTL). 2 disordered regions span residues 708 to 727 (RRERERQTNPSAMEVEEDDP) and 768 to 806 (FGSFRFPSSNQGGSGPSQGSSGGGGGNVFNEDNDDDLYG). Residues 768–778 (FGSFRFPSSNQ) show a composition bias toward low complexity. The segment covering 779–794 (GGSGPSQGSSGGGGGN) has biased composition (gly residues).

The protein belongs to the AAA ATPase family. As to quaternary structure, homohexamer.

The protein localises to the cytoplasm. It localises to the cytosol. It is found in the endoplasmic reticulum. Its subcellular location is the nucleus. The enzyme catalyses ATP + H2O = ADP + phosphate + H(+). Necessary for the fragmentation of Golgi stacks during mitosis and for their reassembly after mitosis. Involved in the formation of the nuclear envelope, and of the transitional endoplasmic reticulum (tER). The transfer of membranes from the endoplasmic reticulum to the Golgi apparatus occurs via 50-70 nm transition vesicles which derive from part-rough, part-smooth transitional elements of the endoplasmic reticulum (tER). Vesicle budding from the tER is an ATP-dependent process. Also involved in DNA damage response: recruited to double-strand breaks (DSBs) sites and promotes the recruitment of tp53bp1 at DNA damage sites. Together with sprtn metalloprotease, involved in the repair of covalent DNA-protein cross-links (DPCs) during DNA synthesis. Involved in interstrand cross-link repair in response to replication stress by mediating unloading of the ubiquitinated CMG helicase complex. Enhances cell cycle progression and inhibits apoptosis at low temperatures. Essential for the maturation of ubiquitin-containing autophagosomes and the clearance of ubiquitinated protein by autophagy. Acts as a negative regulator of type I interferon production by promoting ubiquitination of RIGI. May play a role in the ubiquitin-dependent sorting of membrane proteins to lysosomes where they undergo degradation. May more particularly play a role in caveolins sorting in cells. By controlling the steady-state expression of the IGF1R receptor, indirectly regulates the insulin-like growth factor receptor signaling pathway. The chain is Transitional endoplasmic reticulum ATPase from Danio rerio (Zebrafish).